The chain runs to 444 residues: MAAETSIRKLPSLSGLRHRRNPLEDNPYFHPSNGFYITPSDVILAQVAYDHSAHSQSRVAYHRAGPRREIMYEPSAVKAAIVTCGGLCPGMNTVIRELVVGLWELYGVREIYGIPAGYRGFYSMKAVKLDPKAVHDWHKKGGTVLATSRGGFHLQKIVDAIHLNGYNQVYIIGGDGTMRGAVEIFKEISLRKLEVGITVIPKTVDNDVGIIDRSFGFQTAVEMAQEAISAAHVEAESAVNGIGLVKLMGRSTGHIALHATLSSRDVDCCLIPEMDFYLEGKGGLFEFLEKRLKERGHAVLVVAEGAGQEMIPRNESQKQERDESGNAVFLDVGVWFKSVLKAWWEREHPDELFTVKYIDPTYMIRAVPANATDNLYCTLLAHSAIHGVMAGYTGFVPGPINGNYAYIPLEEVAQTKNQVNTRDHKWAWVRSVTNQPDFETNVKG.

Serine 55 is subject to Phosphoserine. ATP is bound by residues glycine 86, 149 to 150 (RG), and 174 to 177 (GDGT). A Mg(2+)-binding site is contributed by aspartate 175. Substrate-binding positions include 203 to 205 (TVD), 248 to 250 (MGR), glutamate 304, and 362 to 365 (YMIR). The Proton acceptor role is filled by aspartate 205.

The protein belongs to the phosphofructokinase type A (PFKA) family. PPi-dependent PFK group II subfamily. Atypical ATP-dependent clade 'X' sub-subfamily. Homotetramer. Mg(2+) is required as a cofactor. In terms of tissue distribution, mostly expressed in roots and stems.

Its subcellular location is the cytoplasm. It catalyses the reaction beta-D-fructose 6-phosphate + ATP = beta-D-fructose 1,6-bisphosphate + ADP + H(+). It functions in the pathway carbohydrate degradation; glycolysis; D-glyceraldehyde 3-phosphate and glycerone phosphate from D-glucose: step 3/4. Its activity is regulated as follows. Allosterically activated by AMP. In terms of biological role, catalyzes the phosphorylation of D-fructose 6-phosphate to fructose 1,6-bisphosphate by ATP, the first committing step of glycolysis. This chain is ATP-dependent 6-phosphofructokinase 2, found in Arabidopsis thaliana (Mouse-ear cress).